Consider the following 292-residue polypeptide: uncharacterized protein (292 aa).

The first 21 residues, 1–21 (MNSNSNKKRDPARFPAGVAQG), serve as a signal peptide directing secretion. Positions 1–30 (MNSNSNKKRDPARFPAGVAQGCSTTRAGDL) are disordered.

This is an uncharacterized protein from Treponema pallidum (strain Nichols).